An 846-amino-acid chain; its full sequence is cGMP-dependent protein kinase (846 aa).

The segment at 1–22 (MRCNERNKKKAIFSNDDFSGED) is autoinhibitory segment. CNMP-binding domain stretches follow at residues 51-166 (VCST…FIDS), 169-268 (VFDM…IVLG), 288-391 (IFRQ…LGDN), and 411-510 (IFRY…LQII). 3',5'-cyclic GMP contacts are provided by Lys106, Gly115, Glu116, Ala118, Arg125, and Ser126. 3',5'-cyclic GMP is bound by residues Arg466, Gly475, Glu476, Ala478, Arg485, and Thr486. The Protein kinase domain occupies 534–791 (LETERIIGRG…FKDIKEHAFF (258 aa)). ATP-binding positions include 540–548 (IGRGTFGTV) and Lys563. The active-site Proton acceptor is Asp657. Residues 792–846 (GNFNWDKLAGRLLEPPLVSKGETYAEDIDIKQIEEEDALNEGEPLDGDDSWDVDF) enclose the AGC-kinase C-terminal domain. The disordered stretch occupies residues 824–846 (IEEEDALNEGEPLDGDDSWDVDF). Acidic residues predominate over residues 825–846 (EEEDALNEGEPLDGDDSWDVDF).

It belongs to the protein kinase superfamily. AGC Ser/Thr protein kinase family. cGMP subfamily. As to quaternary structure, monomer. Mg(2+) serves as cofactor. Autophosphorylated.

It localises to the cytoplasm. The protein localises to the endoplasmic reticulum membrane. It carries out the reaction L-seryl-[protein] + ATP = O-phospho-L-seryl-[protein] + ADP + H(+). It catalyses the reaction L-threonyl-[protein] + ATP = O-phospho-L-threonyl-[protein] + ADP + H(+). Activated by cGMP. Not activated by cAMP. cGMP binding allosterically triggers a conformational change at the alpha C-helix of cGMP-binding domain 4, which bridges the regulatory and catalytic domains, causing the capping triad, composed of Arg-477, Gln-525 and Asp-526, to form and stabilize the active conformation. The cGMP-binding domains acts cooperatively to activate PKG. Its function is as follows. Serine/threonine protein kinase which acts as a downstream effector of the second messenger cGMP. Controls the release of Ca(2+) from intracellular stores by regulating phosphoinositide biosynthesis. Ca(2+) signals are essential for merozoite and sporozoite invasion and egress from host hepatocytes and erythrocytes, and, in the mosquito vector, for gametocyte activation, and ookinete and sporozoite motility. During the host liver stage, regulates the initial invasion of host hepatocytes by sporozoites by regulating sporozoite motility and microneme exocytosis. Following parasite development in the hepatocytes, required for the release of merosomes, a vesicle containing the mature merozoites. During the asexual blood stage, required for the progression from schizont to the ring stage following merozoite invasion of host erythrocytes and for merozoite egress. Regulates merozoite egress by promoting the release of exonemes and micronemes which contain proteins essential for egress. Phosphorylates CDPK1 predominantly at the late schizont stage; phosphorylation at 'Ser-64' regulates CDPK1 protein-protein interaction and phosphorylation at 'Thr-231' may regulate CDPK1 kinase activity. In the mosquito vector, required for the initiation of gametogenesis induced by xanthurenic acid, specifically the gametocyte differentiation from the crescent-shaped form to the spherical form. Required for the gliding motility of ookinetes to reach and penetrate the midgut epithelium by promoting Ca(2+)-mediated activation of CDPK1 and CDPK4. Also required for microneme secretion in ookinete by promoting Ca(2+)-mediated activation of CDPK3. This Plasmodium vivax (strain Salvador I) protein is cGMP-dependent protein kinase.